The chain runs to 947 residues: Cell adhesion molecule CEACAM5 (947 aa).

A signal peptide spans 1 to 34 (MEASSVLPCKWCTHLQGLLLTASFLTCCHLPTTA). 7 consecutive Ig-like V-type domains span residues 35 to 132 (QITI…EIVS), 166 to 259 (SEGG…VQLY), 270 to 378 (PLQV…LHVN), 392 to 498 (RLSI…LQLD), 509 to 615 (QVKI…LHVN), 642 to 733 (GESV…VQLQ), and 746 to 851 (DQLI…VQVH). 13 N-linked (GlcNAc...) asparagine glycosylation sites follow: N57, N103, N110, N207, N224, N341, N461, N472, N578, N698, N709, N816, and N823. Positions 859-943 (PFVRVTDTTV…SKSSLPVRLA (85 aa)) constitute an Ig-like C2-type 1 domain. A disulfide bond links C878 and C926.

This sequence belongs to the immunoglobulin superfamily. CEA family. As to quaternary structure, homodimer.

The protein resides in the cell membrane. The protein localises to the apical cell membrane. Its subcellular location is the cell surface. Functionally, cell surface glycoprotein that plays a role in cell adhesion, intracellular signaling and tumor progression. Mediates homophilic and heterophilic cell adhesion with other carcinoembryonic antigen-related cell adhesion molecules, such as CEACAM6. Plays a role as an oncogene by promoting tumor progression; induces resistance to anoikis of colorectal carcinoma cells. The polypeptide is Cell adhesion molecule CEACAM5 (Mus musculus (Mouse)).